The chain runs to 647 residues: Acetyl-coenzyme A synthetase (647 aa).

Residues 190–193 and Thr-310 each bind CoA; that span reads RGGR. ATP contacts are provided by residues 386 to 388, 410 to 415, Asp-499, and Arg-514; these read GEP and DTWWQT. Residue Ser-522 participates in CoA binding. Arg-525 serves as a coordination point for ATP. Positions 536, 538, and 541 each coordinate Mg(2+). Arg-583 contributes to the CoA binding site. Lys-608 is subject to N6-acetyllysine.

The protein belongs to the ATP-dependent AMP-binding enzyme family. The cofactor is Mg(2+). Acetylated. Deacetylation by the SIR2-homolog deacetylase activates the enzyme.

It carries out the reaction acetate + ATP + CoA = acetyl-CoA + AMP + diphosphate. Its function is as follows. Catalyzes the conversion of acetate into acetyl-CoA (AcCoA), an essential intermediate at the junction of anabolic and catabolic pathways. AcsA undergoes a two-step reaction. In the first half reaction, AcsA combines acetate with ATP to form acetyl-adenylate (AcAMP) intermediate. In the second half reaction, it can then transfer the acetyl group from AcAMP to the sulfhydryl group of CoA, forming the product AcCoA. This chain is Acetyl-coenzyme A synthetase, found in Xylella fastidiosa (strain 9a5c).